A 234-amino-acid chain; its full sequence is MSTSARDRLIVGLDLPTVTEAEKIVSTLGEEVLFYKIGYQLAFAGGLDFARDLAASGKQVFLDMKLLDIDNTVAKGVENIVKMGVSMLTLHAYPKAMKSAVEAARGSNLCLLGVTVLTSMDEQDVIDAGYEYDPHSLVLRRAEQARAAGMGGIVCSAEEAAAVRKIIGGDMALVTPGIRPAGAEKGDQKRVMTPADALRAGSSHLVVGRPIVAAPDPLAASRAILAEMESALSR.

Residues Asp-14, Lys-36, 63-72 (DMKLLDIDNT), Thr-118, Arg-179, Gln-188, Gly-208, and Arg-209 contribute to the substrate site. The Proton donor role is filled by Lys-65.

Belongs to the OMP decarboxylase family. Type 1 subfamily. As to quaternary structure, homodimer.

It catalyses the reaction orotidine 5'-phosphate + H(+) = UMP + CO2. It functions in the pathway pyrimidine metabolism; UMP biosynthesis via de novo pathway; UMP from orotate: step 2/2. Functionally, catalyzes the decarboxylation of orotidine 5'-monophosphate (OMP) to uridine 5'-monophosphate (UMP). This is Orotidine 5'-phosphate decarboxylase from Rhizobium meliloti (strain 1021) (Ensifer meliloti).